We begin with the raw amino-acid sequence, 261 residues long: Thioredoxin-like protein HCF164, chloroplastic (261 aa).

A chloroplast-targeting transit peptide spans 1–40 (MARLVFSLNLPSSHGFNLSPRNLQSFFVTQTGAPRFRAVR). The tract at residues 39 to 91 (VRCKPNPESSETKQEKLVIDNGETSSASKEVESSSSVADSSSSSSSGFPESPN) is disordered. The segment covering 63–84 (SSASKEVESSSSVADSSSSSSS) has biased composition (low complexity). One can recognise a Thioredoxin domain in the interval 101–229 (VTVIAALSLF…LVENVNALAA (129 aa)). Catalysis depends on nucleophile residues Cys-150 and Cys-153. Residues Cys-150 and Cys-153 are joined by a disulfide bond.

Belongs to the thioredoxin family. As to quaternary structure, interacts in vitro with LTO1.

The protein localises to the plastid. It is found in the chloroplast thylakoid membrane. Thiol-disulfide oxidoreductase that participates in various redox reactions in the chloroplast. Mediates the reduction of PSI-N in the thylakoid lumen. May interact and probably reduce other target proteins of the thylakoid membrane, such as FTSH2, FTSH8, LHCB5, atpA, atpB, atpE, petA and petC. Involved in the biogenesis of the plastid cytochrome b6f complex. Reducing equivalents are provided by stromal M-type thioredoxins and probably transduced through the thylakoid membrane by CCDA. Possesses low insulin disulfide bonds reducing activity. This chain is Thioredoxin-like protein HCF164, chloroplastic, found in Arabidopsis thaliana (Mouse-ear cress).